Consider the following 333-residue polypeptide: CRISPR-associated endonuclease Cas1 (333 aa).

Glu162, His226, and Glu241 together coordinate Mn(2+).

Belongs to the CRISPR-associated endonuclease Cas1 family. In terms of assembly, homodimer, forms a heterotetramer with a Cas2 homodimer. Mg(2+) is required as a cofactor. The cofactor is Mn(2+).

Functionally, CRISPR (clustered regularly interspaced short palindromic repeat), is an adaptive immune system that provides protection against mobile genetic elements (viruses, transposable elements and conjugative plasmids). CRISPR clusters contain spacers, sequences complementary to antecedent mobile elements, and target invading nucleic acids. CRISPR clusters are transcribed and processed into CRISPR RNA (crRNA). Acts as a dsDNA endonuclease. Involved in the integration of spacer DNA into the CRISPR cassette. The polypeptide is CRISPR-associated endonuclease Cas1 (Nanoarchaeum equitans (strain Kin4-M)).